Consider the following 92-residue polypeptide: Large ribosomal subunit protein eL43 (92 aa).

Cysteine 39, cysteine 42, cysteine 57, and cysteine 60 together coordinate Zn(2+). The segment at 39–60 (CSFCGKTKMKRKAVGIWHCGSC) adopts a C4-type zinc-finger fold.

Belongs to the eukaryotic ribosomal protein eL43 family. As to quaternary structure, component of the large ribosomal subunit.

It localises to the cytoplasm. Functionally, component of the large ribosomal subunit. The ribosome is a large ribonucleoprotein complex responsible for the synthesis of proteins in the cell. This chain is Large ribosomal subunit protein eL43 (RPL37A), found in Gallus gallus (Chicken).